Consider the following 164-residue polypeptide: 3-isopropylmalate dehydratase small subunit (164 aa).

It belongs to the LeuD family. LeuD type 2 subfamily. As to quaternary structure, heterodimer of LeuC and LeuD.

The enzyme catalyses (2R,3S)-3-isopropylmalate = (2S)-2-isopropylmalate. It functions in the pathway amino-acid biosynthesis; L-leucine biosynthesis; L-leucine from 3-methyl-2-oxobutanoate: step 2/4. Catalyzes the isomerization between 2-isopropylmalate and 3-isopropylmalate, via the formation of 2-isopropylmaleate. The protein is 3-isopropylmalate dehydratase small subunit of Lachnospira eligens (strain ATCC 27750 / DSM 3376 / VPI C15-48 / C15-B4) (Eubacterium eligens).